Consider the following 309-residue polypeptide: Probable manganese-dependent inorganic pyrophosphatase (309 aa).

Histidine 9, aspartate 13, aspartate 15, aspartate 75, histidine 97, and aspartate 149 together coordinate Mn(2+).

It belongs to the PPase class C family. Mn(2+) is required as a cofactor.

The protein resides in the cytoplasm. It carries out the reaction diphosphate + H2O = 2 phosphate + H(+). The chain is Probable manganese-dependent inorganic pyrophosphatase from Bacillus cereus (strain ZK / E33L).